The sequence spans 424 residues: Cyclin-dependent kinase D-1 (424 aa).

A Protein kinase domain is found at 19–299 (YLKREVLGEG…AQQALEHRYF (281 aa)). Residues 25-33 (LGEGTYGVV) and Lys-48 contribute to the ATP site. The residue at position 29 (Thr-29) is a Phosphothreonine. Tyr-30 carries the phosphotyrosine modification. The active-site Proton acceptor is the Asp-141. Ser-168 carries the post-translational modification Phosphoserine. Position 174 is a phosphothreonine (Thr-174). 2 disordered regions span residues 303-337 (PAPT…PVVL) and 359-424 (ADRT…GYTE). Residues 359–374 (ADRTEEHPSGARHMDD) show a composition bias toward basic and acidic residues.

This sequence belongs to the protein kinase superfamily. CMGC Ser/Thr protein kinase family. CDC2/CDKX subfamily. Interacts with CYCH1-1. Expressed in actively dividing cells of roots, leaves and shoots. Expressed in the intercalary meristem and the elongation zone of internodes.

It localises to the nucleus. The enzyme catalyses L-seryl-[protein] + ATP = O-phospho-L-seryl-[protein] + ADP + H(+). The catalysed reaction is L-threonyl-[protein] + ATP = O-phospho-L-threonyl-[protein] + ADP + H(+). It carries out the reaction [DNA-directed RNA polymerase] + ATP = phospho-[DNA-directed RNA polymerase] + ADP + H(+). Functionally, CDK-activating kinase that may control G1/S phase progression. May control the rate of cell differentiation to accomplish proper development of organs, or in response to a changing environment. Forms a complex with cyclin CYCH1-1 that phosphorylates CDKA-1 and the C-terminal domain (CTD) of the large subunit of RNA polymerase II. In Oryza sativa subsp. japonica (Rice), this protein is Cyclin-dependent kinase D-1 (CDKD-1).